A 607-amino-acid chain; its full sequence is CRISPR-associated DNA-binding protein Cas12m (607 aa).

A wedge domain (WED-N) region spans residues 1 to 16; that stretch reads MTRVTVQTAGVHYKWQ. Positions 17-189 are recognition domain (REC); that stretch reads MPDQLTQQLR…QLRHHRWDGT (173 aa). Residues 50–124 are roof in REC; sequence WSSYPAVAAL…IASVRDEATE (75 aa). The span at 74–83 shows a compositional bias: basic and acidic residues; it reads ASTVKEEKSR. The interval 74–94 is disordered; the sequence is ASTVKEEKSRQRTKRPSHPAV. Residues 190 to 315 are wedge domain (WED-C); the sequence is GTISVQLQRQ…KIPDQGEVDE (126 aa). The tract at residues 316 to 559 is ruvC-I; that stretch reads GPTIAVHLGW…TVSHTGLSRV (244 aa). Positions 391 to 452 are ruvC insertion; it reads SIRDTLVAWL…EGADIAETLE (62 aa). The target nucleic-acid binding (TNB) stretch occupies residues 552-588; it reads SHTGLSRVHAACGHENPADDRYLMQPVLCDGCGRTYD. 4 residues coordinate Zn(2+): His560, Cys563, Cys580, and Cys583. The segment at 589-607 is ruvC-II; it reads TDLSATILMLQRASAATSN. Residue Asp590 coordinates Mg(2+).

The protein belongs to the CRISPR-associated DNA-binding protein Cas12m family. In terms of assembly, binds crRNA and target dsDNA as a monomer. Mg(2+) serves as cofactor. It depends on Zn(2+) as a cofactor.

CRISPR (clustered regularly interspaced short palindromic repeat), is an adaptive immune system that provides protection against mobile genetic elements (viruses, transposable elements and conjugative plasmids). CRISPR clusters contain sequences complementary to antecedent mobile elements and target invading nucleic acids. CRISPR clusters are transcribed and processed into CRISPR RNA (crRNA). Recognizes a short motif in the CRISPR repeat sequences (the 5' PAM or protospacer adjacent motif, 5'-TTN-3' in this organism) to help distinguish self versus nonself, as targets within the bacterial CRISPR locus do not have PAMs. Upon expression in E.coli as a CRISPR locus inhibits plasmid propagation when targeted to regions essential for plasmid propagation (replication origin and a selectable marker); inhibits expression of a non-selectable marker, probably at the transcriptional level. Protects E.coli against bacteriophage M13mp18, to a lesser extent against lambda and VpaE1 as well as phage T4 with hydroxymethyl or unmodified (but not glycosylated) cytosines. Preferentially binds to its associated crRNA. Cas12m-crRNA binds DNA in a PAM-dependent, crRNA-guided fashion. Binds a 20-bp crRNA-ss-target DNA heteroduplex, in a 52 nucleotide crRNA. No dsDNA, ssDNA or RNA nuclease activity is seen for the crRNA-Cas12m complex. Probably required for pre-crRNA processing to mature crRNA. In Gordonia otitidis (strain DSM 44809 / CCUG 52243 / JCM 12355 / NBRC 100426 / IFM 10032), this protein is CRISPR-associated DNA-binding protein Cas12m.